Here is a 620-residue protein sequence, read N- to C-terminus: MDSLSSMGFQTASFFLILLFLFYHLPCVPSQQERSRLCKPFQCGDITVGFPFWGENRQSDCGHFSLKLNCNKPSNTTSLTISGHNYSVLHIDNKSNILSLSRQDFSGPFCSASFSSTPLRSDLFQNLQPYRNLTVFYMCDPRRHFFGNFTCPVKGLGSVVQNSTYRKLCDKSFSVTVPTSYVPEEEALNLTHLESVLRKGLEVKLKISEMSGQECVTTDGNSGFTRFCCTNVSGPEISCLTSITTMNNGTYSDNRPFLVTIGTVLGSILCVCVVLFLAFYLNERRIAKAARIQHLEALGTLRGYNYKQIKKITKSFTEVVGRGGFGTVYRGRLRDGRKVAVKVLKDSKGNCEDFINEVASMSQTSHVNIVTLLGFCYEGSKRAIIYEFLENGSLDQSLNLDVSTLYGIALGVARGLEYLHYGCKTRIVHFDIKPQNVLLDENLRPKVADFGLAKLCEKQESILSLLDTRGTIGYIAPELFSRMYGSVSHKSDVYSYGMLVLEMIGARNKERVQNADPNNSSAYFPDWIYKDLENFDNTRLLGDGLTREEEKNAKKMILVGLWCIQFRPSDRPSMNKVVEMMEGSLDSLDPPPKPLLHMPMQNNNAESSQLSVESSIYSEV.

Residues 1–30 form the signal peptide; sequence MDSLSSMGFQTASFFLILLFLFYHLPCVPS. The Extracellular segment spans residues 31 to 256; it reads QQERSRLCKP…NNGTYSDNRP (226 aa). Asparagine 75, asparagine 85, asparagine 93, asparagine 132, asparagine 148, asparagine 162, asparagine 189, asparagine 231, and asparagine 248 each carry an N-linked (GlcNAc...) asparagine glycan. Residues 257–277 traverse the membrane as a helical segment; it reads FLVTIGTVLGSILCVCVVLFL. Residues 278–620 lie on the Cytoplasmic side of the membrane; the sequence is AFYLNERRIA…SVESSIYSEV (343 aa). A Protein kinase domain is found at 314-596; that stretch reads KSFTEVVGRG…SLDPPPKPLL (283 aa). Residues 320 to 328 and lysine 342 each bind ATP; that span reads VGRGGFGTV. Aspartate 431 functions as the Proton acceptor in the catalytic mechanism. The disordered stretch occupies residues 586 to 620; it reads DSLDPPPKPLLHMPMQNNNAESSQLSVESSIYSEV. Over residues 600–620 the composition is skewed to polar residues; that stretch reads MQNNNAESSQLSVESSIYSEV.

This sequence belongs to the protein kinase superfamily. Ser/Thr protein kinase family.

The protein resides in the membrane. It catalyses the reaction L-seryl-[protein] + ATP = O-phospho-L-seryl-[protein] + ADP + H(+). It carries out the reaction L-threonyl-[protein] + ATP = O-phospho-L-threonyl-[protein] + ADP + H(+). This Arabidopsis thaliana (Mouse-ear cress) protein is LEAF RUST 10 DISEASE-RESISTANCE LOCUS RECEPTOR-LIKE PROTEIN KINASE-like 2.3.